Consider the following 257-residue polypeptide: Ig delta chain C region secreted form (257 aa).

One can recognise an Ig-like 1 domain in the interval 5–105 (PDMFLLSECK…WDSQSSKRVT (101 aa)). The cysteines at positions 26 and 78 are disulfide-linked. N-linked (GlcNAc...) asparagine glycans are attached at residues N58 and N75. Positions 89–111 (PFKFPESWDSQSSKRVTPTLQAK) are disordered. The span at 96–111 (WDSQSSKRVTPTLQAK) shows a compositional bias: polar residues. N-linked (GlcNAc...) asparagine glycosylation is found at N112, N135, and N227. One can recognise an Ig-like 2 domain in the interval 133–233 (PSNLTVNILT…TKLNASKSLA (101 aa)).

As to expression, cell lines producing IgD contain several mRNA species for Ig delta chains. In plasmacytomas, the secreted form is the major component, and the membrane-bound form is a minor component. In spleen, however, the membrane-bound form is the major component. These two forms differ in their C-terminal segments.

The protein localises to the secreted. This Mus musculus (Mouse) protein is Ig delta chain C region secreted form.